Consider the following 260-residue polypeptide: 3'-5' ssDNA/RNA exonuclease TatD (260 aa).

A divalent metal cation-binding residues include E92, H128, and H153.

It belongs to the metallo-dependent hydrolases superfamily. TatD-type hydrolase family. TatD subfamily. As to quaternary structure, monomer. It depends on Mg(2+) as a cofactor.

The protein localises to the cytoplasm. In terms of biological role, 3'-5' exonuclease that prefers single-stranded DNA and RNA. May play a role in the H(2)O(2)-induced DNA damage repair. This Pectobacterium parmentieri (strain WPP163) (Pectobacterium wasabiae (strain WPP163)) protein is 3'-5' ssDNA/RNA exonuclease TatD.